Here is a 217-residue protein sequence, read N- to C-terminus: Probable transaldolase (217 aa).

Lys-85 serves as the catalytic Schiff-base intermediate with substrate.

Belongs to the transaldolase family. Type 3B subfamily.

It is found in the cytoplasm. The catalysed reaction is D-sedoheptulose 7-phosphate + D-glyceraldehyde 3-phosphate = D-erythrose 4-phosphate + beta-D-fructose 6-phosphate. Its pathway is carbohydrate degradation; pentose phosphate pathway; D-glyceraldehyde 3-phosphate and beta-D-fructose 6-phosphate from D-ribose 5-phosphate and D-xylulose 5-phosphate (non-oxidative stage): step 2/3. Transaldolase is important for the balance of metabolites in the pentose-phosphate pathway. The sequence is that of Probable transaldolase from Agathobacter rectalis (strain ATCC 33656 / DSM 3377 / JCM 17463 / KCTC 5835 / VPI 0990) (Eubacterium rectale).